We begin with the raw amino-acid sequence, 124 residues long: Seripauperin-17 (124 aa).

A signal peptide spans 1 to 20 (MVKLTSIAAGVAAIAAGVAA).

It belongs to the SRP1/TIP1 family. Seripauperin subfamily.

The protein is Seripauperin-17 (PAU17) of Saccharomyces cerevisiae (strain ATCC 204508 / S288c) (Baker's yeast).